The primary structure comprises 862 residues: Cone cGMP-specific 3',5'-cyclic phosphodiesterase subunit alpha' (862 aa).

2 GAF domains span residues Ser-75–Leu-224 and Asp-256–Val-433. Residues Ser-97, Asn-116, Asp-169–Thr-172, and Thr-176 each bind 3',5'-cyclic GMP. The PDEase domain maps to Asp-486–Tyr-819. Catalysis depends on His-562, which acts as the Proton donor. Residues His-566, His-602, Asp-603, and Asp-723 each coordinate a divalent metal cation. A compositionally biased stretch (basic and acidic residues) spans Lys-830 to Glu-842. Residues Lys-830–Leu-862 form a disordered region. Position 859 is a cysteine methyl ester (Cys-859). A lipid anchor (S-geranylgeranyl cysteine) is attached at Cys-859. Residues Ile-860–Leu-862 constitute a propeptide, removed in mature form.

The protein belongs to the cyclic nucleotide phosphodiesterase family. In terms of assembly, composed of two alpha' subunits that are associated with 3 smaller proteins of 11, 13, and 15 kDa. A divalent metal cation is required as a cofactor.

The protein localises to the cell membrane. The enzyme catalyses 3',5'-cyclic GMP + H2O = GMP + H(+). In terms of biological role, as cone-specific cGMP phosphodiesterase, it plays an essential role in light detection and cone phototransduction by rapidly decreasing intracellular levels of cGMP. The sequence is that of Cone cGMP-specific 3',5'-cyclic phosphodiesterase subunit alpha' (PDE6C) from Gallus gallus (Chicken).